Reading from the N-terminus, the 401-residue chain is L-rhamnonate dehydratase (401 aa).

The substrate site is built by His29 and Arg55. Asp222, Glu248, and Glu276 together coordinate Mg(2+). The Proton acceptor role is filled by His325. A substrate-binding site is contributed by Glu345.

This sequence belongs to the mandelate racemase/muconate lactonizing enzyme family. RhamD subfamily. In terms of assembly, homooctamer; tetramer of dimers. Requires Mg(2+) as cofactor.

The enzyme catalyses L-rhamnonate = 2-dehydro-3-deoxy-L-rhamnonate + H2O. In terms of biological role, catalyzes the dehydration of L-rhamnonate to 2-keto-3-deoxy-L-rhamnonate (KDR). The sequence is that of L-rhamnonate dehydratase from Salmonella schwarzengrund (strain CVM19633).